We begin with the raw amino-acid sequence, 267 residues long: Luciferase (267 aa).

The N-linked (GlcNAc...) asparagine glycan is linked to Asn4. The helical transmembrane segment at 17–39 (LSSRSIAITCGVVLASAIAFPII) threads the bilayer.

It belongs to the fungal luciferase family.

Its subcellular location is the membrane. It catalyses the reaction 3-hydroxyhispidin + O2 = (E)-caffeoylpyruvate + hnu + CO2. The enzyme catalyses 3-hydroxyhispidin + O2 = 4-[(E)-2-(3,4-dihydroxyphenyl)ethenyl]-1,7-dihydroxy-2,3,5-trioxabicyclo[2.2.2]oct-7-en-6-one. Luciferase; part of the gene cluster that mediates the fungal bioluminescence cycle. Uses the fungal luciferin 3-hydroxyhispidin as a substrate to produce an endoperoxide as a high-energy intermediate with decomposition that yields oxyluciferin (also known as caffeoylpyruvate) and light emission. The fungal bioluminescence cycle begins with the hispidin synthetase that catalyzes the formation of hispidin which is further hydroxylated by the hispidin-3-hydroxylase, yielding the fungal luciferin 3-hydroxyhispidin. The luciferase then produces an endoperoxide as a high-energy intermediate with decomposition that yields oxyluciferin and light emission. Oxyluciferin can be recycled to caffeic acid by caffeoylpyruvate hydrolase. This chain is Luciferase, found in Neonothopanus nambi (Agaricus nambi).